Consider the following 1048-residue polypeptide: Anguibactin system regulator (1048 aa).

The 75-residue stretch at 965-1039 (PIITASEDRV…AFAIIMDRCR (75 aa)) folds into the Carrier domain.

Belongs to the ATP-dependent AMP-binding enzyme family.

Its pathway is siderophore biosynthesis; anguibactin biosynthesis. In terms of biological role, bifunctional protein that plays an essential role in virulence. Plays a role in both production of the siderophore anguibactin and regulation of iron transport genes. In Vibrio anguillarum (strain ATCC 68554 / 775) (Listonella anguillarum), this protein is Anguibactin system regulator (angR).